Reading from the N-terminus, the 848-residue chain is Protein NETWORKED 2C (848 aa).

In terms of domain architecture, NAB spans 10-90 (YSWWWASHVR…ERYDHISKEL (81 aa)). The tract at residues 108–141 (FAMNEDDDDDAPVSPRHHKNKTSNKNVPKVPDLP) is disordered. Coiled coils occupy residues 172–204 (LSKT…SYEN), 241–278 (EAQI…SRKQ), 305–454 (SEKE…KATN), and 752–797 (AKFE…SEEF).

Belongs to the NET family.

Functionally, plant-specific actin binding protein. May be part of a membrane-cytoskeletal adapter complex. This chain is Protein NETWORKED 2C, found in Arabidopsis thaliana (Mouse-ear cress).